Reading from the N-terminus, the 624-residue chain is Exocyst complex component EXO70B1 (624 aa).

A disordered region spans residues 148–176 (FGLNPQGDAGAMNHRFDSEEEEDDDRDFN).

The protein belongs to the EXO70 family. As to quaternary structure, interacts with EXO70B2, SEC5A and EXO84B. Binds to PUB18. Binds directly to B1L at the plasma membrane and in small vesicles. Target of the E3 ubiquitin-protein ligase PUB18 that mediates its ubiquitination and degradation via the 26S proteasome.

The protein resides in the cytoplasmic vesicle. It localises to the phagosome. It is found in the endomembrane system. The protein localises to the cell membrane. Its subcellular location is the vesicle. Functionally, component of an exocyst subcomplex specifically involved in autophagy-related, Golgi-independent membrane traffic to the vacuole. Regulates autophagosome formation and autophagy-related Golgi-independent import into the vacuole. Positive regulator of both abscisic acid (ABA)-promoted and mannitol (drought)-promoted stomatal closure. Involved in the regulation of lateral root formation. This Arabidopsis thaliana (Mouse-ear cress) protein is Exocyst complex component EXO70B1.